Consider the following 396-residue polypeptide: Proteasome-activating nucleotidase (396 aa).

Residues 16-57 adopt a coiled-coil conformation; that stretch reads VTYLKRRIRQLELQVRMLEADKERLERELSRLRSEMSRLRQP. ATP-binding positions include 181–186 and His320; that span reads GCGKTL. A docks into pockets in the proteasome alpha-ring to cause gate opening region spans residues 394-396; sequence IYG.

It belongs to the AAA ATPase family. In terms of assembly, homohexamer. The hexameric complex has a two-ring architecture resembling a top hat that caps the 20S proteasome core at one or both ends. Upon ATP-binding, the C-terminus of PAN interacts with the alpha-rings of the proteasome core by binding to the intersubunit pockets.

Its subcellular location is the cytoplasm. Its function is as follows. ATPase which is responsible for recognizing, binding, unfolding and translocation of substrate proteins into the archaeal 20S proteasome core particle. Is essential for opening the gate of the 20S proteasome via an interaction with its C-terminus, thereby allowing substrate entry and access to the site of proteolysis. Thus, the C-termini of the proteasomal ATPase function like a 'key in a lock' to induce gate opening and therefore regulate proteolysis. Unfolding activity requires energy from ATP hydrolysis, whereas ATP binding alone promotes ATPase-20S proteasome association which triggers gate opening, and supports translocation of unfolded substrates. The chain is Proteasome-activating nucleotidase from Pyrococcus furiosus (strain ATCC 43587 / DSM 3638 / JCM 8422 / Vc1).